The primary structure comprises 137 residues: Large ribosomal subunit protein uL16 (137 aa).

The span at 1-13 shows a compositional bias: basic residues; that stretch reads MLQPKRRKYRKEQ. The disordered stretch occupies residues 1 to 22; it reads MLQPKRRKYRKEQKGRNTGVAT.

This sequence belongs to the universal ribosomal protein uL16 family. In terms of assembly, part of the 50S ribosomal subunit.

In terms of biological role, binds 23S rRNA and is also seen to make contacts with the A and possibly P site tRNAs. This Polynucleobacter asymbioticus (strain DSM 18221 / CIP 109841 / QLW-P1DMWA-1) (Polynucleobacter necessarius subsp. asymbioticus) protein is Large ribosomal subunit protein uL16.